The following is a 186-amino-acid chain: Nucleoside diphosphate kinase, mitochondrial (186 aa).

Residues 1-32 constitute a mitochondrion transit peptide; sequence MGSLFGRVAALRALLCGPRFQCLLVRPSSGGP. The ATP site is built by K44, F92, R120, T126, R137, and N147. Catalysis depends on H150, which acts as the Pros-phosphohistidine intermediate.

Belongs to the NDK family. In terms of assembly, homohexamer. Interacts with OPA1. Interacts with CAPN8. The cofactor is Mg(2+). In terms of tissue distribution, expressed in the base region of the oxyntic and pyloric mucosae.

It localises to the mitochondrion intermembrane space. Its subcellular location is the mitochondrion matrix. The catalysed reaction is a 2'-deoxyribonucleoside 5'-diphosphate + ATP = a 2'-deoxyribonucleoside 5'-triphosphate + ADP. It catalyses the reaction a ribonucleoside 5'-diphosphate + ATP = a ribonucleoside 5'-triphosphate + ADP. Major role in the synthesis of nucleoside triphosphates other than ATP. The ATP gamma phosphate is transferred to the NDP beta phosphate via a ping-pong mechanism, using a phosphorylated active-site intermediate. Through the catalyzed exchange of gamma-phosphate between di- and triphosphonucleosides participates in regulation of intracellular nucleotide homeostasis. Binds to anionic phospholipids, predominantly to cardiolipin; the binding inhibits its phosphotransfer activity. Acts as a mitochondria-specific NDK; its association with cardiolipin-containing mitochondrial inner membrane is coupled to respiration suggesting that ADP locally regenerated in the mitochondrion innermembrane space by its activity is directly taken up via ANT ADP/ATP translocase into the matrix space to stimulate respiratory ATP regeneration. Proposed to increase GTP-loading on dynamin-related GTPase OPA1 in mitochondria. In vitro can induce liposome cross-linking suggesting that it can cross-link inner and outer membranes to form contact sites, and promotes intermembrane migration of anionic phosphoplipids. Promotes the redistribution of cardiolipin between the mitochondrial inner membrane and outer membrane which is implicated in pro-apoptotic signaling. The polypeptide is Nucleoside diphosphate kinase, mitochondrial (Nme4) (Mus musculus (Mouse)).